The chain runs to 181 residues: Oligoribonuclease (181 aa).

One can recognise an Exonuclease domain in the interval 8-171 (LIWIDLEMTG…DDIRESIAEL (164 aa)). Residue tyrosine 129 is part of the active site.

It belongs to the oligoribonuclease family.

Its subcellular location is the cytoplasm. In terms of biological role, 3'-to-5' exoribonuclease specific for small oligoribonucleotides. The chain is Oligoribonuclease from Alcanivorax borkumensis (strain ATCC 700651 / DSM 11573 / NCIMB 13689 / SK2).